We begin with the raw amino-acid sequence, 622 residues long: Chaperone protein HscA homolog (622 aa).

The protein belongs to the heat shock protein 70 family.

Chaperone involved in the maturation of iron-sulfur cluster-containing proteins. Has a low intrinsic ATPase activity which is markedly stimulated by HscB. This Pseudoalteromonas atlantica (strain T6c / ATCC BAA-1087) protein is Chaperone protein HscA homolog.